Here is a 426-residue protein sequence, read N- to C-terminus: 3-phosphoshikimate 1-carboxyvinyltransferase (426 aa).

3-phosphoshikimate contacts are provided by lysine 22, serine 23, and arginine 27. A phosphoenolpyruvate-binding site is contributed by lysine 22. Residues glycine 96 and arginine 124 each contribute to the phosphoenolpyruvate site. 7 residues coordinate 3-phosphoshikimate: serine 170, serine 171, glutamine 172, serine 198, aspartate 314, asparagine 337, and lysine 341. Phosphoenolpyruvate is bound at residue glutamine 172. The active-site Proton acceptor is the aspartate 314. 3 residues coordinate phosphoenolpyruvate: arginine 345, arginine 387, and lysine 412.

It belongs to the EPSP synthase family. Monomer.

The protein localises to the cytoplasm. It catalyses the reaction 3-phosphoshikimate + phosphoenolpyruvate = 5-O-(1-carboxyvinyl)-3-phosphoshikimate + phosphate. Its pathway is metabolic intermediate biosynthesis; chorismate biosynthesis; chorismate from D-erythrose 4-phosphate and phosphoenolpyruvate: step 6/7. Catalyzes the transfer of the enolpyruvyl moiety of phosphoenolpyruvate (PEP) to the 5-hydroxyl of shikimate-3-phosphate (S3P) to produce enolpyruvyl shikimate-3-phosphate and inorganic phosphate. In Shewanella piezotolerans (strain WP3 / JCM 13877), this protein is 3-phosphoshikimate 1-carboxyvinyltransferase.